The chain runs to 248 residues: DNA repair protein RecO (248 aa).

This sequence belongs to the RecO family.

Its function is as follows. Involved in DNA repair and RecF pathway recombination. The chain is DNA repair protein RecO from Chelativorans sp. (strain BNC1).